The chain runs to 321 residues: GDP-L-fucose synthase (321 aa).

Residues 10–16 (GHRGMVG), 36–41 (RDELNL), and 105–108 (LGSS) contribute to the NADP(+) site. Tyrosine 136 serves as the catalytic Proton donor/acceptor. NADP(+) is bound by residues lysine 140, 163 to 166 (PTNL), and histidine 179. Positions 187, 202, 209, and 278 each coordinate substrate.

It belongs to the NAD(P)-dependent epimerase/dehydratase family. Fucose synthase subfamily. As to quaternary structure, homodimer.

It is found in the cytoplasm. It carries out the reaction GDP-beta-L-fucose + NADP(+) = GDP-4-dehydro-alpha-D-rhamnose + NADPH + H(+). The protein operates within nucleotide-sugar biosynthesis; GDP-L-fucose biosynthesis via de novo pathway; GDP-L-fucose from GDP-alpha-D-mannose: step 2/2. It functions in the pathway exopolysaccharide biosynthesis; colanic acid biosynthesis. Its activity is regulated as follows. Subject to product inhibition by NADP and GDP-fucose. Functionally, catalyzes the two-step NADP-dependent conversion of GDP-4-dehydro-6-deoxy-D-mannose to GDP-fucose, involving an epimerase and a reductase reaction. The chain is GDP-L-fucose synthase from Escherichia coli (strain K12).